A 257-amino-acid chain; its full sequence is Phosphonates import ATP-binding protein PhnC (257 aa).

The ABC transporter domain occupies 4-248 (IEFKNVSKVY…VFSEIYGRTI (245 aa)). 37–44 (GLSGAGKS) lines the ATP pocket.

The protein belongs to the ABC transporter superfamily. Phosphonates importer (TC 3.A.1.9.1) family. The complex is composed of two ATP-binding proteins (PhnC), two transmembrane proteins (PhnE) and a solute-binding protein (PhnD).

The protein localises to the cell membrane. The catalysed reaction is phosphonate(out) + ATP + H2O = phosphonate(in) + ADP + phosphate + H(+). Its function is as follows. Part of the ABC transporter complex PhnCDE involved in phosphonates import. Responsible for energy coupling to the transport system. The sequence is that of Phosphonates import ATP-binding protein PhnC from Staphylococcus aureus (strain COL).